The sequence spans 82 residues: uncharacterized protein (82 aa).

This is an uncharacterized protein from Dictyostelium discoideum (Social amoeba).